An 831-amino-acid chain; its full sequence is Periplasmic nitrate reductase (831 aa).

The tat-type signal signal peptide spans 1-29 (MKVSRRDFIKQTAIAATASVAGIPLGTEA). Positions 41-97 (LKWSKAPCRFCGTGCGVTVAVRDNKVVATQGDPQCEVNKGLNCVKGYFLSKIMYGQD) constitute a 4Fe-4S Mo/W bis-MGD-type domain. Positions 48, 51, 55, and 83 each coordinate [4Fe-4S] cluster. Mo-bis(molybdopterin guanine dinucleotide)-binding positions include lysine 85, glutamine 152, asparagine 177, cysteine 181, 214–221 (WGSNMAEM), 245–249 (STFTH), 264–266 (QTD), methionine 375, glutamine 379, asparagine 485, 511–512 (SD), lysine 534, aspartate 561, and 721–730 (TGRVLEHWHS). Residue tryptophan 797 coordinates substrate. 2 residues coordinate Mo-bis(molybdopterin guanine dinucleotide): asparagine 805 and lysine 822.

This sequence belongs to the prokaryotic molybdopterin-containing oxidoreductase family. NasA/NapA/NarB subfamily. In terms of assembly, component of the periplasmic nitrate reductase NapAB complex composed of NapA and NapB. [4Fe-4S] cluster is required as a cofactor. It depends on Mo-bis(molybdopterin guanine dinucleotide) as a cofactor. Predicted to be exported by the Tat system. The position of the signal peptide cleavage has not been experimentally proven.

Its subcellular location is the periplasm. The catalysed reaction is 2 Fe(II)-[cytochrome] + nitrate + 2 H(+) = 2 Fe(III)-[cytochrome] + nitrite + H2O. Catalytic subunit of the periplasmic nitrate reductase complex NapAB. Receives electrons from NapB and catalyzes the reduction of nitrate to nitrite. In Cupriavidus pinatubonensis (strain JMP 134 / LMG 1197) (Cupriavidus necator (strain JMP 134)), this protein is Periplasmic nitrate reductase.